The chain runs to 340 residues: Delta-aminolevulinic acid dehydratase (340 aa).

Positions 134, 136, and 144 each coordinate Zn(2+). The Schiff-base intermediate with substrate role is filled by Lys-211. 5-aminolevulinate-binding residues include Arg-221 and Arg-233. Lys-264 functions as the Schiff-base intermediate with substrate in the catalytic mechanism. Ser-291 and Tyr-330 together coordinate 5-aminolevulinate.

This sequence belongs to the ALAD family. Homooctamer. Requires Zn(2+) as cofactor.

It catalyses the reaction 2 5-aminolevulinate = porphobilinogen + 2 H2O + H(+). It participates in porphyrin-containing compound metabolism; protoporphyrin-IX biosynthesis; coproporphyrinogen-III from 5-aminolevulinate: step 1/4. In terms of biological role, catalyzes an early step in the biosynthesis of tetrapyrroles. Binds two molecules of 5-aminolevulinate per subunit, each at a distinct site, and catalyzes their condensation to form porphobilinogen. The chain is Delta-aminolevulinic acid dehydratase (HEM2) from Eremothecium gossypii (strain ATCC 10895 / CBS 109.51 / FGSC 9923 / NRRL Y-1056) (Yeast).